We begin with the raw amino-acid sequence, 230 residues long: Ribonuclease 3 (230 aa).

In terms of domain architecture, RNase III spans 10–133 (DPRLLSRIGY…IIGAIYLDSG (124 aa)). Position 46 (Glu-46) interacts with Mg(2+). Asp-50 is a catalytic residue. 2 residues coordinate Mg(2+): Asp-119 and Glu-122. Glu-122 is an active-site residue. The DRBM domain maps to 161–230 (DPKSRLQEYL…AAEILKLLEQ (70 aa)).

The protein belongs to the ribonuclease III family. As to quaternary structure, homodimer. Requires Mg(2+) as cofactor.

Its subcellular location is the cytoplasm. It carries out the reaction Endonucleolytic cleavage to 5'-phosphomonoester.. Digests double-stranded RNA. Involved in the processing of primary rRNA transcript to yield the immediate precursors to the large and small rRNAs (23S and 16S). Processes some mRNAs, and tRNAs when they are encoded in the rRNA operon. Processes pre-crRNA and tracrRNA of type II CRISPR loci if present in the organism. This chain is Ribonuclease 3 (rnc), found in Acinetobacter pittii (strain PHEA-2).